An 86-amino-acid chain; its full sequence is Conotoxin Ec15a (86 aa).

Positions 1–23 are cleaved as a signal peptide; it reads MEKLTILILVATVLLAIQVLGQG. A propeptide spanning residues 24 to 49 is cleaved from the precursor; that stretch reads EGEKPPKEWVQQYAAKRLWALMKGPR. Q50 carries the post-translational modification Pyrrolidone carboxylic acid.

Belongs to the conotoxin O2 superfamily. In terms of processing, contains 4 disulfide bonds. In terms of tissue distribution, expressed by the venom duct.

It is found in the secreted. In Conus emaciatus (False virgin cone), this protein is Conotoxin Ec15a.